A 61-amino-acid chain; its full sequence is Sec-independent protein translocase protein TatA (61 aa).

The chain crosses the membrane as a helical span at residues 2–22 (GLSGISPLSLLLILAIIVALF).

It belongs to the TatA/E family. The Tat system comprises two distinct complexes: a TatABC complex, containing multiple copies of TatA, TatB and TatC subunits, and a separate TatA complex, containing only TatA subunits. Substrates initially bind to the TatABC complex, which probably triggers association of the separate TatA complex to form the active translocon.

It is found in the cell inner membrane. Part of the twin-arginine translocation (Tat) system that transports large folded proteins containing a characteristic twin-arginine motif in their signal peptide across membranes. TatA could form the protein-conducting channel of the Tat system. The sequence is that of Sec-independent protein translocase protein TatA from Legionella pneumophila (strain Corby).